We begin with the raw amino-acid sequence, 297 residues long: Bifunctional protein FolD 2 (297 aa).

NADP(+) contacts are provided by residues 173–175 (GKS), Ser-198, and Ile-239.

This sequence belongs to the tetrahydrofolate dehydrogenase/cyclohydrolase family. Homodimer.

The catalysed reaction is (6R)-5,10-methylene-5,6,7,8-tetrahydrofolate + NADP(+) = (6R)-5,10-methenyltetrahydrofolate + NADPH. It carries out the reaction (6R)-5,10-methenyltetrahydrofolate + H2O = (6R)-10-formyltetrahydrofolate + H(+). Its pathway is one-carbon metabolism; tetrahydrofolate interconversion. Its function is as follows. Catalyzes the oxidation of 5,10-methylenetetrahydrofolate to 5,10-methenyltetrahydrofolate and then the hydrolysis of 5,10-methenyltetrahydrofolate to 10-formyltetrahydrofolate. The sequence is that of Bifunctional protein FolD 2 from Sinorhizobium medicae (strain WSM419) (Ensifer medicae).